The following is a 70-amino-acid chain: U2-agatoxin-Ao1n (70 aa).

The first 20 residues, 1–20 (MRAIISLLLISAMVFYIIAA), serve as a signal peptide directing secretion. A propeptide spanning residues 21-34 (VPEEEGLQLSEDER) is cleaved from the precursor. Intrachain disulfides connect cysteine 37/cysteine 53, cysteine 44/cysteine 58, and cysteine 52/cysteine 68. Residue leucine 69 is modified to Leucine amide.

This sequence belongs to the neurotoxin 01 (U2-agtx) family. In terms of tissue distribution, expressed by the venom gland.

It localises to the secreted. In terms of biological role, insect active toxin causing rapid but reversible paralysis in crickets. No activity shown in mammals. Does not show effect on mammalian voltage-gated calcium channels. The chain is U2-agatoxin-Ao1n from Agelena orientalis (Funnel-web spider).